A 715-amino-acid chain; its full sequence is Polyribonucleotide nucleotidyltransferase (715 aa).

Mg(2+) contacts are provided by D493 and D499. Positions 560 to 619 (PRMITIKINPEKIRDVIGKGGSVIRALTEETGTTIDISDDGVVTIASTSSEGMAEAKKRI) constitute a KH domain. The S1 motif domain maps to 629–697 (GQVYEGTVLK…EKGRVRLSAK (69 aa)).

This sequence belongs to the polyribonucleotide nucleotidyltransferase family. The cofactor is Mg(2+).

It is found in the cytoplasm. It carries out the reaction RNA(n+1) + phosphate = RNA(n) + a ribonucleoside 5'-diphosphate. Involved in mRNA degradation. Catalyzes the phosphorolysis of single-stranded polyribonucleotides processively in the 3'- to 5'-direction. The polypeptide is Polyribonucleotide nucleotidyltransferase (Burkholderia vietnamiensis (strain G4 / LMG 22486) (Burkholderia cepacia (strain R1808))).